A 244-amino-acid polypeptide reads, in one-letter code: Isoprenyl transferase (244 aa).

Asp20 is a catalytic residue. Asp20 provides a ligand contact to Mg(2+). Substrate-binding positions include 21-24 (GNGR), Trp25, Arg33, His37, and 65-67 (SSE). Asn68 (proton acceptor) is an active-site residue. Substrate-binding positions include Trp69, Arg71, Arg188, and 194–196 (RIS). Glu207 is a binding site for Mg(2+).

Belongs to the UPP synthase family. In terms of assembly, homodimer. Mg(2+) is required as a cofactor.

Catalyzes the condensation of isopentenyl diphosphate (IPP) with allylic pyrophosphates generating different type of terpenoids. The chain is Isoprenyl transferase from Rhodopirellula baltica (strain DSM 10527 / NCIMB 13988 / SH1).